Here is a 177-residue protein sequence, read N- to C-terminus: Adenine phosphoribosyltransferase (177 aa).

The protein belongs to the purine/pyrimidine phosphoribosyltransferase family. In terms of assembly, homodimer.

The protein resides in the cytoplasm. The enzyme catalyses AMP + diphosphate = 5-phospho-alpha-D-ribose 1-diphosphate + adenine. Its pathway is purine metabolism; AMP biosynthesis via salvage pathway; AMP from adenine: step 1/1. Its function is as follows. Catalyzes a salvage reaction resulting in the formation of AMP, that is energically less costly than de novo synthesis. The chain is Adenine phosphoribosyltransferase from Chlorobium phaeobacteroides (strain BS1).